Here is a 586-residue protein sequence, read N- to C-terminus: Estrogen receptor (586 aa).

Positions 1 to 179 (MTMPLPNKTT…SMESTKETRY (179 aa)) are modulating. The tract at residues 144-173 (FYRSSSDNRRQSGRERMSSANDKGPPSMES) is disordered. The segment covering 149 to 160 (SDNRRQSGRERM) has biased composition (basic and acidic residues). NR C4-type zinc fingers lie at residues 180–200 (CAVC…CEGC) and 216–240 (CPAT…LRKC). The nuclear receptor DNA-binding region spans 180-245 (CAVCSDYASG…RLRKCYEVGM (66 aa)). Residues 246–302 (MKGGIRKDRRGGRLLKHKRQKEEQEQKNDVDPSEIRTASIWVNPSVKSMKLSPVLSL) are hinge. Positions 252-264 (KDRRGGRLLKHKR) are enriched in basic residues. Residues 252 to 276 (KDRRGGRLLKHKRQKEEQEQKNDVD) are disordered. Basic and acidic residues predominate over residues 265–276 (QKEEQEQKNDVD). The NR LBD domain occupies 303-539 (TAEQLISALM…DLLLEMLDAH (237 aa)). The span at 543-556 (TPKDKTTTQEEDSR) shows a compositional bias: basic and acidic residues. Residues 543-569 (TPKDKTTTQEEDSRSPPTTTVNGASPC) are disordered.

Belongs to the nuclear hormone receptor family. NR3 subfamily. In terms of assembly, binds DNA as a homodimer. Can form a heterodimer with ER-beta.

The protein localises to the nucleus. The steroid hormones and their receptors are involved in the regulation of eukaryotic gene expression and affect cellular proliferation and differentiation in target tissues. This is Estrogen receptor (esr1) from Xenopus laevis (African clawed frog).